Reading from the N-terminus, the 322-residue chain is Ribonuclease Z (322 aa).

Zn(2+) contacts are provided by His-60, His-62, Asp-64, His-65, His-140, Asp-210, and His-270. The active-site Proton acceptor is Asp-64.

The protein belongs to the RNase Z family. As to quaternary structure, homodimer. Zn(2+) serves as cofactor.

The catalysed reaction is Endonucleolytic cleavage of RNA, removing extra 3' nucleotides from tRNA precursor, generating 3' termini of tRNAs. A 3'-hydroxy group is left at the tRNA terminus and a 5'-phosphoryl group is left at the trailer molecule.. In terms of biological role, zinc phosphodiesterase, which displays some tRNA 3'-processing endonuclease activity. Probably involved in tRNA maturation, by removing a 3'-trailer from precursor tRNA. In Methanococcus aeolicus (strain ATCC BAA-1280 / DSM 17508 / OCM 812 / Nankai-3), this protein is Ribonuclease Z.